We begin with the raw amino-acid sequence, 88 residues long: uncharacterized protein (88 aa).

2 helical membrane passes run 13 to 33 and 62 to 82; these read FLAF…GWGP and WFNI…ITGI.

It localises to the cell membrane. This is an uncharacterized protein from Bacillus subtilis (strain 168).